A 556-amino-acid polypeptide reads, in one-letter code: CDP-diacylglycerol--glycerol-3-phosphate 3-phosphatidyltransferase, mitochondrial (556 aa).

The transit peptide at 1–28 (MAVAAAAAAGPVFWRRLLGLLPGRPGLA) directs the protein to the mitochondrion. Position 49 is a phosphoserine (Ser49). 124 to 131 (ASLYLGTG) lines the ATP pocket. PLD phosphodiesterase domains are found at residues 215-241 (TIGL…SDSY) and 460-493 (RGWT…GYRS). Active-site residues include His220, Lys222, and Asp227.

It belongs to the CDP-alcohol phosphatidyltransferase class-II family.

It is found in the mitochondrion. It catalyses the reaction a CDP-1,2-diacyl-sn-glycerol + sn-glycerol 3-phosphate = a 1,2-diacyl-sn-glycero-3-phospho-(1'-sn-glycero-3'-phosphate) + CMP + H(+). It functions in the pathway phospholipid metabolism; phosphatidylglycerol biosynthesis; phosphatidylglycerol from CDP-diacylglycerol: step 1/2. Activated by calcium and magnesium and inhibited by other bivalent cations. In terms of biological role, functions in the biosynthesis of the anionic phospholipids phosphatidylglycerol and cardiolipin. The chain is CDP-diacylglycerol--glycerol-3-phosphate 3-phosphatidyltransferase, mitochondrial (PGS1) from Pongo abelii (Sumatran orangutan).